A 182-amino-acid chain; its full sequence is uncharacterized protein (182 aa).

Residues 17–34 traverse the membrane as a helical segment; the sequence is LSLVLFAVLSVLPLGGCA. TPR repeat units follow at residues 89–122 and 123–156; these read VDAA…TPDN and LRAL…NPEN.

The protein localises to the membrane. This is an uncharacterized protein from Sinorhizobium fredii (strain NBRC 101917 / NGR234).